The primary structure comprises 125 residues: DNA-directed RNA polymerase II subunit RPB9 (125 aa).

The residue at position 1 (methionine 1) is an N-acetylmethionine. Zn(2+) contacts are provided by cysteine 17, cysteine 20, cysteine 39, cysteine 42, cysteine 86, cysteine 89, cysteine 114, and cysteine 119. Residues 17–42 (CQECNNMLYPKEDKENRILLYACRNC) form a C4-type zinc finger. The TFIIS-type zinc-finger motif lies at 82–124 (EDHPCQKCGHKEAVFFQSHSARAEDAMRLYYVCTAPHCGHRWT).

This sequence belongs to the archaeal RpoM/eukaryotic RPA12/RPB9/RPC11 RNA polymerase family. In terms of assembly, component of the RNA polymerase II (Pol II) core complex consisting of 12 subunits: a ten-subunit catalytic core composed of POLR2A/RPB1, POLR2B/RPB2, POLR2C/RPB3, POLR2I/RPB9, POLR2J/RPB11, POLR2E/RPABC1, POLR2F/RPABC2, POLR2H/RPABC3, POLR2K/RPABC4 and POLR2L/RPABC5 and a mobile stalk composed of two subunits POLR2D/RPB4 and POLR2G/RPB7, protruding from the core and functioning primarily in transcription initiation. Part of Pol II(G) complex, in which Pol II core associates with an additional subunit POLR2M; unlike conventional Pol II, Pol II(G) functions as a transcriptional repressor. Part of TBP-based Pol II pre-initiation complex (PIC), in which Pol II core assembles with general transcription factors and other specific initiation factors including GTF2E1, GTF2E2, GTF2F1, GTF2F2, TCEA1, ERCC2, ERCC3, GTF2H2, GTF2H3, GTF2H4, GTF2H5, GTF2A1, GTF2A2, GTF2B and TBP; this large multi-subunit PIC complex mediates DNA unwinding and targets Pol II core to the transcription start site where the first phosphodiester bond forms.

It is found in the nucleus. It localises to the nucleolus. Functionally, DNA-dependent RNA polymerase catalyzes the transcription of DNA into RNA using the four ribonucleoside triphosphates as substrates. Component of RNA polymerase II which synthesizes mRNA precursors and many functional non-coding RNAs. Pol II is the central component of the basal RNA polymerase II transcription machinery. It is composed of mobile elements that move relative to each other. POLR2I/RPB9 is part of the upper jaw surrounding the central large cleft and thought to grab the incoming DNA template. In Bos taurus (Bovine), this protein is DNA-directed RNA polymerase II subunit RPB9 (POLR2I).